The chain runs to 178 residues: Ribosome maturation factor RimM (178 aa).

A PRC barrel domain is found at 100–178; it reads TDGEYYWYQL…EMKVEWDADF (79 aa).

This sequence belongs to the RimM family. Binds ribosomal protein uS19.

It is found in the cytoplasm. Functionally, an accessory protein needed during the final step in the assembly of 30S ribosomal subunit, possibly for assembly of the head region. Essential for efficient processing of 16S rRNA. May be needed both before and after RbfA during the maturation of 16S rRNA. It has affinity for free ribosomal 30S subunits but not for 70S ribosomes. This is Ribosome maturation factor RimM from Pseudomonas fluorescens (strain SBW25).